A 351-amino-acid chain; its full sequence is MLKTSEKIFSETPSIITKEEGLKILNGVIPLTTCLDKAFQERNRYFENKVRIHILDNIKNGYCPEDCGYCAQRKNANSGVQEYPMKSEQEIYEDAVQAKKNGAYRFCMVTSGTGPNRLTTEKLASTIQRITDELNMKVCLSAGLLDIEKAQVLKEAGLDRYNHNLNTSENHYSEICDTHTYLQRAQTLDSVSKAGIGMCSGVIVGMGESFQDIVDVAFQLKSFRVISIPVNFFIPVKGHTIKNPSVLTPELCVRILCMFRLINPDSEIRIAAGREGHLRSLSATALFAANSLFSSGYLNVKGSEILETVAMIRDAGFVPELSNGEILPENFGTESFYSEKNFPELYKFKKF.

The Radical SAM core domain maps to 48–265 (NKVRIHILDN…LCMFRLINPD (218 aa)). Residues cysteine 63, cysteine 67, and cysteine 70 each coordinate [4Fe-4S] cluster. [2Fe-2S] cluster-binding residues include cysteine 107, cysteine 139, cysteine 199, and arginine 269.

This sequence belongs to the radical SAM superfamily. Biotin synthase family. Homodimer. [4Fe-4S] cluster is required as a cofactor. The cofactor is [2Fe-2S] cluster.

The enzyme catalyses (4R,5S)-dethiobiotin + (sulfur carrier)-SH + 2 reduced [2Fe-2S]-[ferredoxin] + 2 S-adenosyl-L-methionine = (sulfur carrier)-H + biotin + 2 5'-deoxyadenosine + 2 L-methionine + 2 oxidized [2Fe-2S]-[ferredoxin]. It functions in the pathway cofactor biosynthesis; biotin biosynthesis; biotin from 7,8-diaminononanoate: step 2/2. Functionally, catalyzes the conversion of dethiobiotin (DTB) to biotin by the insertion of a sulfur atom into dethiobiotin via a radical-based mechanism. This Leptospira interrogans serogroup Icterohaemorrhagiae serovar copenhageni (strain Fiocruz L1-130) protein is Biotin synthase.